The following is a 37-amino-acid chain: Large ribosomal subunit protein bL36c (37 aa).

Belongs to the bacterial ribosomal protein bL36 family.

Its subcellular location is the plastid. This Euglena longa (Euglenophycean alga) protein is Large ribosomal subunit protein bL36c (rpl36).